We begin with the raw amino-acid sequence, 625 residues long: tRNA uridine 5-carboxymethylaminomethyl modification enzyme MnmG (625 aa).

Residues Gly13 to Gly18, Val125, and Ser182 contribute to the FAD site. An NAD(+)-binding site is contributed by Gly276–Phe290. Gln373 serves as a coordination point for FAD.

This sequence belongs to the MnmG family. In terms of assembly, homodimer. Heterotetramer of two MnmE and two MnmG subunits. The cofactor is FAD.

It localises to the cytoplasm. NAD-binding protein involved in the addition of a carboxymethylaminomethyl (cmnm) group at the wobble position (U34) of certain tRNAs, forming tRNA-cmnm(5)s(2)U34. The protein is tRNA uridine 5-carboxymethylaminomethyl modification enzyme MnmG of Lactococcus lactis subsp. cremoris (strain SK11).